The primary structure comprises 205 residues: Large ribosomal subunit protein bL25 (205 aa).

Positions 180-205 (HEEVAEEAEETEGEDAEEAPAAEGEE) are disordered. Positions 183-205 (VAEEAEETEGEDAEEAPAAEGEE) are enriched in acidic residues.

This sequence belongs to the bacterial ribosomal protein bL25 family. CTC subfamily. As to quaternary structure, part of the 50S ribosomal subunit; part of the 5S rRNA/L5/L18/L25 subcomplex. Contacts the 5S rRNA. Binds to the 5S rRNA independently of L5 and L18.

In terms of biological role, this is one of the proteins that binds to the 5S RNA in the ribosome where it forms part of the central protuberance. The sequence is that of Large ribosomal subunit protein bL25 from Corynebacterium diphtheriae (strain ATCC 700971 / NCTC 13129 / Biotype gravis).